We begin with the raw amino-acid sequence, 330 residues long: Cathepsin K (330 aa).

Residues 1–16 (MWGLKVVLLLPVMSSA) form the signal peptide. The propeptide at 17-115 (LYPEEILDTQ…TLYIPDWEGR (99 aa)) is activation peptide. N104 carries an N-linked (GlcNAc...) asparagine glycan. 3 cysteine pairs are disulfide-bonded: C137/C178, C171/C211, and C270/C319. The active site involves C140. Active-site residues include H277 and N297.

The protein belongs to the peptidase C1 family. In terms of tissue distribution, expressed in the thyroid epithelial cells.

The protein localises to the lysosome. Its subcellular location is the secreted. It is found in the apical cell membrane. It carries out the reaction Broad proteolytic activity. With small-molecule substrates and inhibitors, the major determinant of specificity is P2, which is preferably Leu, Met &gt; Phe, and not Arg.. Functionally, thiol protease involved in osteoclastic bone resorption and may participate partially in the disorder of bone remodeling. Displays potent endoprotease activity against fibrinogen at acid pH. May play an important role in extracellular matrix degradation. Involved in the release of thyroid hormone thyroxine (T4) by limited proteolysis of TG/thyroglobulin in the thyroid follicle lumen. The sequence is that of Cathepsin K (CTSK) from Sus scrofa (Pig).